The following is a 704-amino-acid chain: Elongation factor G (704 aa).

In terms of domain architecture, tr-type G spans 6–282 (NKVRNIGIMA…AVIDYLPTPL (277 aa)). Residues 15 to 22 (AHIDAGKT), 79 to 83 (DTPGH), and 133 to 136 (NKMD) contribute to the GTP site.

Belongs to the TRAFAC class translation factor GTPase superfamily. Classic translation factor GTPase family. EF-G/EF-2 subfamily.

The protein localises to the cytoplasm. In terms of biological role, catalyzes the GTP-dependent ribosomal translocation step during translation elongation. During this step, the ribosome changes from the pre-translocational (PRE) to the post-translocational (POST) state as the newly formed A-site-bound peptidyl-tRNA and P-site-bound deacylated tRNA move to the P and E sites, respectively. Catalyzes the coordinated movement of the two tRNA molecules, the mRNA and conformational changes in the ribosome. The sequence is that of Elongation factor G from Corynebacterium diphtheriae (strain ATCC 700971 / NCTC 13129 / Biotype gravis).